The primary structure comprises 150 residues: UPF0178 protein Rru_A0086 (150 aa).

The protein belongs to the UPF0178 family.

This Rhodospirillum rubrum (strain ATCC 11170 / ATH 1.1.1 / DSM 467 / LMG 4362 / NCIMB 8255 / S1) protein is UPF0178 protein Rru_A0086.